The chain runs to 325 residues: GMP reductase (325 aa).

Cys-174 serves as the catalytic Thioimidate intermediate. 203 to 226 provides a ligand contact to NADP(+); sequence IIADGGIRTNGDIAKSIRFGANMV.

The protein belongs to the IMPDH/GMPR family. GuaC type 2 subfamily.

It catalyses the reaction IMP + NH4(+) + NADP(+) = GMP + NADPH + 2 H(+). Catalyzes the irreversible NADPH-dependent deamination of GMP to IMP. It functions in the conversion of nucleobase, nucleoside and nucleotide derivatives of G to A nucleotides, and in maintaining the intracellular balance of A and G nucleotides. The sequence is that of GMP reductase from Latilactobacillus sakei subsp. sakei (strain 23K) (Lactobacillus sakei subsp. sakei).